A 1065-amino-acid polypeptide reads, in one-letter code: Probable arabinosyltransferase B (1065 aa).

12 consecutive transmembrane segments (helical) span residues 15 to 37 (WVAT…LPVV), 204 to 226 (LKLA…LWRL), 241 to 263 (NWRT…HVIG), 394 to 413 (YSRL…TLGV), 417 to 436 (GLIA…RILV), 441 to 463 (VVGT…TVVF), 510 to 527 (FGFL…FIML), 540 to 557 (AWRL…LMFT), 567 to 589 (LFAA…AVLG), 596 to 618 (AFLA…WWYV), 633 to 655 (GGIT…AIWL), and 667 to 689 (LARA…VFIA).

The protein belongs to the emb family.

The protein resides in the cell membrane. Functionally, arabinosyl transferase responsible for the polymerization of arabinose into the arabinan of arabinogalactan. In Mycobacterium avium, this protein is Probable arabinosyltransferase B (embB).